We begin with the raw amino-acid sequence, 1464 residues long: Secretory phospholipase A2 receptor (1464 aa).

The N-terminal stretch at 1–22 (MLLSPSLLLPLLLLLGAPRGCA) is a signal peptide. The Extracellular segment spans residues 23-1398 (EGVAAALTPE…ELPEKGPSHS (1376 aa)). The Ricin B-type lectin domain maps to 40-163 (KGIFVIQSES…GSGGGDICEY (124 aa)). 17 disulfides stabilise this stretch: Cys-53/Cys-66, Cys-91/Cys-108, Cys-180/Cys-206, Cys-194/Cys-221, Cys-262/Cys-356, Cys-332/Cys-348, Cys-408/Cys-503, Cys-480/Cys-495, Cys-619/Cys-636, Cys-701/Cys-798, Cys-776/Cys-790, Cys-842/Cys-939, Cys-916/Cys-931, Cys-1069/Cys-1089, Cys-1211/Cys-1225, Cys-1282/Cys-1378, and Cys-1356/Cys-1370. Asn-95 is a glycosylation site (N-linked (GlcNAc...) asparagine). The Fibronectin type-II domain occupies 175–223 (AHGMPCMFPFQYNHQWHHECTREGREDDLLWCATTSRYERDEKWGFCPD). 8 consecutive C-type lectin domains span residues 240–357 (NSHI…YVCK), 387–504 (YNRN…YVCK), 524–645 (HGGF…MSLC), 675–799 (GLAS…WICK), 821–940 (YQDA…SICK), 967–1098 (FNYK…GFVC), 1123–1234 (YGNR…GAIC), and 1259–1379 (FKSN…FICK). Asn-456 carries N-linked (GlcNAc...) asparagine glycosylation. The helical transmembrane segment at 1399–1419 (IIPLAVVLTLIVIVAICTLSF) threads the bilayer. Over 1420–1464 (CIYKHNGGFFRRLAGFRNPYYPATNFSTVHLEENILISDLEKSDQ) the chain is Cytoplasmic. The Endocytosis signal signature appears at 1437–1443 (NPYYPAT).

As to quaternary structure, interacts with sPLA2-IB/PLA2G1B; this interaction mediates intracellular signaling as well as clearance of extracellular sPLA2-IB/PLA2G1B via endocytotic pathway. Interacts with sPLA2-X/PLA2G10; this interaction mediates sPLA2-X/PLA2G10 clearance and inactivation. Post-translationally, the secretory phospholipase A2 receptor form may be produced by the action of metalloproteinases. It contains all extracellular domains and only lacks transmembrane and cytosolic regions. It is however unclear whether this form is produced by proteolytic cleavage as suggested by some experiments, or by alternative splicing.

The protein resides in the cell membrane. Its subcellular location is the secreted. Functionally, receptor for secretory phospholipase A2 (sPLA2). Also able to bind to snake PA2-like toxins. Although its precise function remains unclear, binding of sPLA2 to its receptor participates in both positive and negative regulation of sPLA2 functions as well as clearance of sPLA2. Binding of sPLA2-IB/PLA2G1B induces various effects depending on the cell type, such as activation of the mitogen-activated protein kinase (MAPK) cascade to induce cell proliferation, the production of lipid mediators, selective release of arachidonic acid in bone marrow-derived mast cells. In neutrophils, binding of sPLA2-IB/PLA2G1B can activate p38 MAPK to stimulate elastase release and cell adhesion. May be involved in responses in pro-inflammatory cytokine productions during endotoxic shock. Also has endocytic properties and rapidly internalizes sPLA2 ligands, which is particularly important for the clearance of extracellular sPLA2s to protect their potent enzymatic activities. The soluble secretory phospholipase A2 receptor form is circulating and acts as a negative regulator of sPLA2 functions by blocking the biological functions of sPLA2-IB/PLA2G1B and sPLA2-X/PLA2G10. The chain is Secretory phospholipase A2 receptor (PLA2R1) from Pongo abelii (Sumatran orangutan).